The sequence spans 78 residues: COP9 signalosome complex subunit 5b (78 aa).

Belongs to the peptidase M67A family. CSN5 subfamily. As to quaternary structure, component of the CSN complex, probably composed of CSN1, CSN2, CSN3, CSN4, CSN5 (CSN5A or CSN5B), CSN6 (CSN6A or CSN6B), CSN7 and CSN8. A divalent metal cation is required as a cofactor.

It is found in the cytoplasm. The protein resides in the nucleus. Its function is as follows. Probable protease subunit of the COP9 signalosome complex (CSN), a complex involved in various cellular and developmental processes such as photomorphogenesis and auxin and jasmonate responses. The CSN complex is an essential regulator of the ubiquitin (Ubl) conjugation pathway by mediating the deneddylation of the cullin subunits of the SCF-type E3 ligase complexes, leading to decrease the Ubl ligase activity of SCF. In the complex, it probably acts as the catalytic center that mediates the cleavage of Nedd8 from cullins. It however has no metalloprotease activity by itself and requires the other subunits of the CSN complex. The CSN complex is involved in repression of photomorphogenesis in darkness by regulating the activity of COP1-containing Ubl ligase complexes. The chain is COP9 signalosome complex subunit 5b (CSN5B) from Brassica oleracea (Wild cabbage).